Here is a 224-residue protein sequence, read N- to C-terminus: Ribosomal RNA small subunit methyltransferase G (224 aa).

S-adenosyl-L-methionine-binding positions include Gly89, Phe94, 140–141 (AE), and Arg153.

This sequence belongs to the methyltransferase superfamily. RNA methyltransferase RsmG family.

It localises to the cytoplasm. Specifically methylates the N7 position of a guanine in 16S rRNA. The chain is Ribosomal RNA small subunit methyltransferase G from Bacteroides fragilis (strain YCH46).